The following is a 351-amino-acid chain: Glycerol-3-phosphate dehydrogenase 1-like protein (351 aa).

Position 11–16 (11–16 (GSGNWG)) interacts with NAD(+). Lysine 121 serves as a coordination point for substrate. Alanine 154 is an NAD(+) binding site. The active-site Proton acceptor is the lysine 205. NAD(+) is bound by residues arginine 271, lysine 298, and glutamine 300. Residue 271–272 (RN) coordinates substrate.

This sequence belongs to the NAD-dependent glycerol-3-phosphate dehydrogenase family.

Its subcellular location is the cytoplasm. It catalyses the reaction sn-glycerol 3-phosphate + NAD(+) = dihydroxyacetone phosphate + NADH + H(+). Plays a role in regulating cardiac sodium current. The protein is Glycerol-3-phosphate dehydrogenase 1-like protein (gpd1l) of Danio rerio (Zebrafish).